A 348-amino-acid polypeptide reads, in one-letter code: UPF0324 membrane protein BH02290 (348 aa).

Transmembrane regions (helical) follow at residues 13–35, 45–67, 74–96, 106–128, 135–157, 167–189, 196–218, 223–245, 257–275, 285–307, and 319–341; these read AFLNDFSPGILACLIISVLAYGL, QAWLESLVLAILLGSITGSCFTL, GITFCAKTLLEIAIVLLGASISV, LLASIIFVIFVTLILSFTIGRLF, AMLVACGNAICGNSAIVAVAPVI, SIAFTALLGVLIILFLPFLHPFL, YGVLSGMVVYAVPQVLAATASVS, QIATVVKLVRVLMLGPLIFALSI, LHTLVPWFIIGFIFMMLIR, LIPIRFIAQLFTVISMAALGLGV, and VILASTCSILILGVCSLIMIQLN.

This sequence belongs to the UPF0324 family.

Its subcellular location is the cell membrane. The sequence is that of UPF0324 membrane protein BH02290 from Bartonella henselae (strain ATCC 49882 / DSM 28221 / CCUG 30454 / Houston 1) (Rochalimaea henselae).